A 220-amino-acid polypeptide reads, in one-letter code: Ribose-5-phosphate isomerase A (220 aa).

Substrate is bound by residues 28-31, 81-84, and 94-97; these read TGST, DGAD, and KGGG. Glu103 acts as the Proton acceptor in catalysis. Substrate is bound at residue Lys121.

The protein belongs to the ribose 5-phosphate isomerase family. As to quaternary structure, homodimer.

The enzyme catalyses aldehydo-D-ribose 5-phosphate = D-ribulose 5-phosphate. The protein operates within carbohydrate degradation; pentose phosphate pathway; D-ribose 5-phosphate from D-ribulose 5-phosphate (non-oxidative stage): step 1/1. Catalyzes the reversible conversion of ribose-5-phosphate to ribulose 5-phosphate. In Leptothrix cholodnii (strain ATCC 51168 / LMG 8142 / SP-6) (Leptothrix discophora (strain SP-6)), this protein is Ribose-5-phosphate isomerase A.